A 477-amino-acid chain; its full sequence is Glycogen synthase (477 aa).

Position 15 (K15) interacts with ADP-alpha-D-glucose.

The protein belongs to the glycosyltransferase 1 family. Bacterial/plant glycogen synthase subfamily.

The catalysed reaction is [(1-&gt;4)-alpha-D-glucosyl](n) + ADP-alpha-D-glucose = [(1-&gt;4)-alpha-D-glucosyl](n+1) + ADP + H(+). It participates in glycan biosynthesis; glycogen biosynthesis. Synthesizes alpha-1,4-glucan chains using ADP-glucose. This chain is Glycogen synthase, found in Streptococcus pneumoniae (strain ATCC 700669 / Spain 23F-1).